Consider the following 207-residue polypeptide: ATP-dependent Clp protease proteolytic subunit (207 aa).

The Nucleophile role is filled by Ser111. The active site involves His136.

Belongs to the peptidase S14 family. As to quaternary structure, fourteen ClpP subunits assemble into 2 heptameric rings which stack back to back to give a disk-like structure with a central cavity, resembling the structure of eukaryotic proteasomes.

The protein localises to the cytoplasm. It carries out the reaction Hydrolysis of proteins to small peptides in the presence of ATP and magnesium. alpha-casein is the usual test substrate. In the absence of ATP, only oligopeptides shorter than five residues are hydrolyzed (such as succinyl-Leu-Tyr-|-NHMec, and Leu-Tyr-Leu-|-Tyr-Trp, in which cleavage of the -Tyr-|-Leu- and -Tyr-|-Trp bonds also occurs).. Its function is as follows. Cleaves peptides in various proteins in a process that requires ATP hydrolysis. Has a chymotrypsin-like activity. Plays a major role in the degradation of misfolded proteins. The protein is ATP-dependent Clp protease proteolytic subunit of Photorhabdus laumondii subsp. laumondii (strain DSM 15139 / CIP 105565 / TT01) (Photorhabdus luminescens subsp. laumondii).